Reading from the N-terminus, the 335-residue chain is Protein FATTY ACID EXPORT 3, chloroplastic (335 aa).

The transit peptide at 1 to 72 (MMSIPMELMS…PEVLLNRSVV (72 aa)) directs the protein to the chloroplast. Residues 82-101 (GESGVEVGKEKSDIDVEDDT) form a disordered region. Basic and acidic residues predominate over residues 88-101 (VGKEKSDIDVEDDT). Positions 101 to 160 (TSKEAWKQTLESFKEQVSKMQSVSSEAYSVNSQKAMTVLKETSEQLRIQAEKAKEELGTK) form a coiled coil. The next 3 helical transmembrane spans lie at 205–225 (FHVG…NFMV), 228–248 (SIPA…LSLA), and 286–306 (STFL…FYLY). Residues 316–335 (PTLEDGGEDESSDGFVRSEG) are disordered.

Belongs to the TMEM14 family.

It localises to the plastid. It is found in the chloroplast membrane. In terms of biological role, may be involved in free fatty acids export from the plastids. This Arabidopsis thaliana (Mouse-ear cress) protein is Protein FATTY ACID EXPORT 3, chloroplastic.